A 248-amino-acid polypeptide reads, in one-letter code: Myelin protein P0 (248 aa).

An N-terminal signal peptide occupies residues methionine 1–alanine 29. Residues isoleucine 30–threonine 143 enclose the Ig-like V-type domain. Residues isoleucine 30–arginine 153 lie on the Extracellular side of the membrane. A disulfide bond links cysteine 50 and cysteine 127. A glycan (N-linked (GlcNAc...) (complex) asparagine) is linked at asparagine 122. Residues tyrosine 154 to valine 179 form a helical membrane-spanning segment. Residues arginine 180–lysine 248 are Cytoplasmic-facing. Residue serine 210 is modified to Phosphoserine; by PKC. The interval aspartate 224–lysine 248 is disordered. Phosphoserine occurs at positions 226 and 228. Phosphoserine; by PKC occurs at positions 233 and 243.

This sequence belongs to the myelin P0 protein family. In terms of assembly, homodimer and homotetramer. Post-translationally, N-glycosylated; contains sulfate-substituted glycan. As to expression, found only in peripheral nervous system Schwann cells.

The protein resides in the cell membrane. The protein localises to the myelin membrane. Functionally, is an adhesion molecule necessary for normal myelination in the peripheral nervous system. It mediates adhesion between adjacent myelin wraps and ultimately drives myelin compaction. This is Myelin protein P0 (MPZ) from Homo sapiens (Human).